The sequence spans 89 residues: Small ribosomal subunit protein uS15 (89 aa).

This sequence belongs to the universal ribosomal protein uS15 family. In terms of assembly, part of the 30S ribosomal subunit. Forms a bridge to the 50S subunit in the 70S ribosome, contacting the 23S rRNA.

In terms of biological role, one of the primary rRNA binding proteins, it binds directly to 16S rRNA where it helps nucleate assembly of the platform of the 30S subunit by binding and bridging several RNA helices of the 16S rRNA. Its function is as follows. Forms an intersubunit bridge (bridge B4) with the 23S rRNA of the 50S subunit in the ribosome. This chain is Small ribosomal subunit protein uS15, found in Xanthobacter autotrophicus (strain ATCC BAA-1158 / Py2).